A 60-amino-acid polypeptide reads, in one-letter code: uncharacterized protein (60 aa).

This is an uncharacterized protein from Acidianus convivator (ATV).